The sequence spans 404 residues: Tryptophan synthase beta chain (404 aa).

An N6-(pyridoxal phosphate)lysine modification is found at Lys-94.

Belongs to the TrpB family. Tetramer of two alpha and two beta chains. The cofactor is pyridoxal 5'-phosphate.

It carries out the reaction (1S,2R)-1-C-(indol-3-yl)glycerol 3-phosphate + L-serine = D-glyceraldehyde 3-phosphate + L-tryptophan + H2O. Its pathway is amino-acid biosynthesis; L-tryptophan biosynthesis; L-tryptophan from chorismate: step 5/5. In terms of biological role, the beta subunit is responsible for the synthesis of L-tryptophan from indole and L-serine. In Staphylococcus aureus (strain bovine RF122 / ET3-1), this protein is Tryptophan synthase beta chain.